The sequence spans 544 residues: Chaperonin GroEL (544 aa).

ATP-binding positions include 30-33, Lys-51, 87-91, Gly-415, 481-483, and Asp-497; these read TLGP, DGTTT, and DAL.

This sequence belongs to the chaperonin (HSP60) family. Forms a cylinder of 14 subunits composed of two heptameric rings stacked back-to-back. Interacts with the co-chaperonin GroES.

It is found in the cytoplasm. The catalysed reaction is ATP + H2O + a folded polypeptide = ADP + phosphate + an unfolded polypeptide.. Together with its co-chaperonin GroES, plays an essential role in assisting protein folding. The GroEL-GroES system forms a nano-cage that allows encapsulation of the non-native substrate proteins and provides a physical environment optimized to promote and accelerate protein folding. This Chlamydia trachomatis serovar A (strain ATCC VR-571B / DSM 19440 / HAR-13) protein is Chaperonin GroEL.